Consider the following 65-residue polypeptide: MPKMKTKKSAAKRFVVRPGGTVKRGQAFKRHILTKKTTKNKRHLRGSTAVHDSDLNSVRAMLPFA.

This sequence belongs to the bacterial ribosomal protein bL35 family.

The sequence is that of Large ribosomal subunit protein bL35 from Paraburkholderia xenovorans (strain LB400).